A 310-amino-acid polypeptide reads, in one-letter code: Mitochondrial citrate transporter E (310 aa).

Solcar repeat units lie at residues 2-95, 107-199, and 208-293; these read STTT…LRQG, QSLG…AKRR, and DGPG…TNKI. 6 helical membrane-spanning segments follow: residues 8 to 28, 72 to 92, 114 to 133, 178 to 198, 211 to 228, and 265 to 286; these read FIAG…FETV, GSAY…YEPL, LAGA…FFLV, AMVR…FAKR, GLHL…CCVM, and IYKG…TLSL.

The protein belongs to the mitochondrial carrier (TC 2.A.29) family.

The protein localises to the mitochondrion inner membrane. Mitochondrial transporter that does not mediate citrate export from mitochondria to cytoplasm. Its exact function has still to be determined. The chain is Mitochondrial citrate transporter E from Aspergillus niger (strain ATCC 1015 / CBS 113.46 / FGSC A1144 / LSHB Ac4 / NCTC 3858a / NRRL 328 / USDA 3528.7).